A 260-amino-acid chain; its full sequence is Acyl-coenzyme A diphosphatase FITM2 (260 aa).

Over 1 to 23 (MERLENCAQMFQRRFLNESFRRH) the chain is Cytoplasmic. Residues 24-44 (CPVLLACIVLGGSLLKELCPL) form a helical membrane-spanning segment. At 45–57 (PDSYWNNKRNVLN) the chain is on the lumenal side. A helical transmembrane segment spans residues 58-78 (VYFVKFSWGWTLWLLLPFIAL). The Cytoplasmic portion of the chain corresponds to 79–93 (TNYKLTRSTTKVLRR). Residues 94 to 114 (LSSLLVSTLIWYLCTNLFLYI) form a helical membrane-spanning segment. Topologically, residues 115 to 145 (ENITGSCYESEAMSDPKEHQDRRECRLHSGY) are lumenal. The chain crosses the membrane as a helical span at residues 146–166 (WHGFDISGHCFLLSYCILLIL). His-154 is an active-site residue. The Cytoplasmic portion of the chain corresponds to 167–189 (EETSIISNIRFERHWHRMAINAQ). Transmembrane regions (helical) follow at residues 190–210 (FAAL…TAVY) and 211–231 (FHNI…WYIT). His-212 is a catalytic residue. The Cytoplasmic segment spans residues 232–260 (YRWWYLQPISPGLPPASASRSGKEPIYRN).

Belongs to the FIT family. FIT2 subfamily.

Its subcellular location is the endoplasmic reticulum membrane. It catalyses the reaction an acyl-CoA + H2O = an acyl-4'-phosphopantetheine + adenosine 3',5'-bisphosphate + 2 H(+). In terms of biological role, fatty acyl-coenzyme A (CoA) diphosphatase that hydrolyzes fatty acyl-CoA to yield acyl-4'-phosphopantetheine and adenosine 3',5'-bisphosphate. Preferentially hydrolyzes unsaturated long-chain acyl-CoA substrates in the endoplasmic reticulum (ER) lumen. This catalytic activity is required for maintaining ER structure and for lipid droplets (LDs) biogenesis, which are lipid storage organelles involved in maintaining lipid and energy homeostasis. May directly bind to diacylglycerol (DAGs) and triacylglycerol, which is also important for LD biogenesis. May support directional budding of nacent LDs from the ER into the cytosol by reducing DAG levels at sites of LD formation. May play a role in the regulation of cell morphology, ER morphology and cytoskeletal organization. In Xenopus tropicalis (Western clawed frog), this protein is Acyl-coenzyme A diphosphatase FITM2.